The sequence spans 532 residues: Developmental and secondary metabolism regulator ve1 (532 aa).

The Velvet domain maps to 26-220 (NRSLWYQLTV…ADQGCRVRIR (195 aa)). Positions 40 to 45 (ERARAC) match the Nuclear localization signal motif. Positions 217–229 (VRIRRDVRMRKRD) are enriched in basic residues. 2 disordered regions span residues 217-440 (VRIR…TEPS) and 458-520 (PQVD…RADG). Positions 233-250 (GGNNNNNNNAGNNAGNNG) are enriched in low complexity. Composition is skewed to basic and acidic residues over residues 251–260 (FERREEDFGR) and 283–294 (SEHRASYSDVSR). Residues 302 to 317 (YPPPPPPPPSYDPTPS) are compositionally biased toward pro residues. A compositionally biased stretch (low complexity) spans 397 to 411 (STSTYVPPSPSVYST). Positions 435–463 (MNTEPSRGSIKISALVEPMPVIEPQVDPL) are PEST. Residues 481–493 (FAQNTRPLFNGQR) show a composition bias toward polar residues.

The protein belongs to the velvet family. VeA subfamily. Component of the heterotrimeric velvet complex composed of laeA, ve1 and velB; Ve1 acting as a bridging protein between laeA and velB. Interacts directly with laeA and velB.

The protein localises to the nucleus. The protein resides in the cytoplasm. Its function is as follows. Component of the velvet transcription factor complex that controls sexual/asexual developmental ratio in response to light, promoting sexual development in the darkness while stimulating asexual sporulation under illumination. The velvet complex hat acts as a global regulator for secondary metabolite gene expression. Controls the expression of the aurofusarin and trichothecene gene clusters. Also controls the expression of the deoxynivalenol (DON) gene cluster. Regulates hyphal growth and pigment formation. Acts as a positive regulator of virulence. The sequence is that of Developmental and secondary metabolism regulator ve1 from Gibberella zeae (strain ATCC MYA-4620 / CBS 123657 / FGSC 9075 / NRRL 31084 / PH-1) (Wheat head blight fungus).